The sequence spans 136 residues: Histone H3-like 3 (136 aa).

Basic residues predominate over residues 1-15 (MARTKQTARKSHGGK). Residues 1–42 (MARTKQTARKSHGGKAPRTLLATKAARKSAPTTGGVKKPHRY) form a disordered region. N6,N6,N6-trimethyllysine; alternate occurs at positions 5 and 10. 2 positions are modified to N6,N6-dimethyllysine; alternate: lysine 5 and lysine 10. Lysine 5 and lysine 10 each carry N6-methyllysine; alternate. N6-acetyllysine; alternate is present on lysine 10. Phosphoserine is present on serine 11. N6-acetyllysine is present on lysine 15. 2 positions are modified to N6-methyllysine; alternate: lysine 24 and lysine 28. The residue at position 24 (lysine 24) is an N6-acetyllysine; alternate. Lysine 28 is subject to N6,N6,N6-trimethyllysine; alternate. Residue lysine 28 is modified to N6,N6-dimethyllysine; alternate. Serine 29 bears the Phosphoserine mark. Lysine 37 is subject to N6,N6,N6-trimethyllysine; alternate. Position 37 is an N6,N6-dimethyllysine; alternate (lysine 37). An N6-methyllysine; alternate modification is found at lysine 37.

The protein belongs to the histone H3 family. In terms of assembly, the nucleosome is a histone octamer containing two molecules each of H2A, H2B, H3 and H4 assembled in one H3-H4 heterotetramer and two H2A-H2B heterodimers. The octamer wraps approximately 147 bp of DNA. In terms of tissue distribution, expressed in roots, seedlings, leaves and open flowers.

Its subcellular location is the nucleus. It localises to the chromosome. Its function is as follows. Core component of nucleosome. Nucleosomes wrap and compact DNA into chromatin, limiting DNA accessibility to the cellular machineries which require DNA as a template. Histones thereby play a central role in transcription regulation, DNA repair, DNA replication and chromosomal stability. DNA accessibility is regulated via a complex set of post-translational modifications of histones, also called histone code, and nucleosome remodeling. The sequence is that of Histone H3-like 3 from Arabidopsis thaliana (Mouse-ear cress).